The sequence spans 123 residues: Large ribosomal subunit protein uL14 (123 aa).

The protein belongs to the universal ribosomal protein uL14 family. As to quaternary structure, part of the 50S ribosomal subunit. Forms a cluster with proteins L3 and L19. In the 70S ribosome, L14 and L19 interact and together make contacts with the 16S rRNA in bridges B5 and B8.

Its function is as follows. Binds to 23S rRNA. Forms part of two intersubunit bridges in the 70S ribosome. The polypeptide is Large ribosomal subunit protein uL14 (Vibrio cholerae serotype O1 (strain ATCC 39541 / Classical Ogawa 395 / O395)).